Here is a 20-residue protein sequence, read N- to C-terminus: C-reactive protein (20 aa).

In terms of domain architecture, Pentraxin (PTX) spans 1 to 20 (SPVAASYRATAGLAGKALDF).

This sequence belongs to the pentraxin family. Homodimer; disulfide-linked. It is not known if it assembles into a pentraxin (or pentaxin) structure. Pentraxins have a discoid arrangement of 5 non-covalently bound subunits. Glycosylated.

It localises to the secreted. Its function is as follows. Displays several functions associated with host defense: it promotes agglutination, bacterial capsular swelling, phagocytosis, and complement fixation through its calcium-dependent binding to phosphorylcholine. The protein is C-reactive protein of Mustelus canis (Smooth dogfish).